Here is a 241-residue protein sequence, read N- to C-terminus: Probable transcriptional regulator PhnF (241 aa).

The HTH gntR-type domain maps to 11–78 (PTRYQEIAAK…QGVGVLVLMR (68 aa)). Positions 38-57 (EQQLAARFEVNRHTLRRAID) form a DNA-binding region, H-T-H motif.

Its function is as follows. Belongs to an operon involved in alkylphosphonate uptake and C-P lyase. Exact function not known. By similarity could be a transcriptional regulator. In Escherichia coli (strain K12), this protein is Probable transcriptional regulator PhnF (phnF).